The primary structure comprises 179 residues: Large ribosomal subunit protein uL10 (179 aa).

Belongs to the universal ribosomal protein uL10 family. Part of the ribosomal stalk of the 50S ribosomal subunit. The N-terminus interacts with L11 and the large rRNA to form the base of the stalk. The C-terminus forms an elongated spine to which L12 dimers bind in a sequential fashion forming a multimeric L10(L12)X complex.

Its function is as follows. Forms part of the ribosomal stalk, playing a central role in the interaction of the ribosome with GTP-bound translation factors. This is Large ribosomal subunit protein uL10 from Polynucleobacter necessarius subsp. necessarius (strain STIR1).